The sequence spans 323 residues: Methenyltetrahydromethanopterin cyclohydrolase (323 aa).

The protein belongs to the MCH family.

It localises to the cytoplasm. The catalysed reaction is 5,10-methenyl-5,6,7,8-tetrahydromethanopterin + H2O = N(5)-formyl-5,6,7,8-tetrahydromethanopterin + H(+). Its pathway is one-carbon metabolism; methanogenesis from CO(2); 5,10-methenyl-5,6,7,8-tetrahydromethanopterin from CO(2): step 3/3. Catalyzes the reversible interconversion of 5-formyl-H(4)MPT to methenyl-H(4)MPT(+). This is Methenyltetrahydromethanopterin cyclohydrolase from Methanobrevibacter smithii (strain ATCC 35061 / DSM 861 / OCM 144 / PS).